Reading from the N-terminus, the 382-residue chain is UDP-4-amino-4-deoxy-L-arabinose--oxoglutarate aminotransferase (382 aa).

An N6-(pyridoxal phosphate)lysine modification is found at lysine 183.

This sequence belongs to the DegT/DnrJ/EryC1 family. ArnB subfamily. As to quaternary structure, homodimer. Requires pyridoxal 5'-phosphate as cofactor.

The catalysed reaction is UDP-4-amino-4-deoxy-beta-L-arabinose + 2-oxoglutarate = UDP-beta-L-threo-pentopyranos-4-ulose + L-glutamate. The protein operates within nucleotide-sugar biosynthesis; UDP-4-deoxy-4-formamido-beta-L-arabinose biosynthesis; UDP-4-deoxy-4-formamido-beta-L-arabinose from UDP-alpha-D-glucuronate: step 2/3. It functions in the pathway bacterial outer membrane biogenesis; lipopolysaccharide biosynthesis. In terms of biological role, catalyzes the conversion of UDP-4-keto-arabinose (UDP-Ara4O) to UDP-4-amino-4-deoxy-L-arabinose (UDP-L-Ara4N). The modified arabinose is attached to lipid A and is required for resistance to polymyxin and cationic antimicrobial peptides. This is UDP-4-amino-4-deoxy-L-arabinose--oxoglutarate aminotransferase from Pseudomonas aeruginosa (strain ATCC 15692 / DSM 22644 / CIP 104116 / JCM 14847 / LMG 12228 / 1C / PRS 101 / PAO1).